We begin with the raw amino-acid sequence, 802 residues long: Ras GTPase-activating protein 4 (802 aa).

2 consecutive C2 domains span residues 1–105 (MAKR…SGWT) and 116–232 (VQGE…EGWF). Ca(2+) contacts are provided by Asp-21, Asp-27, Asp-74, Asp-76, Ser-79, Asp-82, Asp-149, Asp-155, Asp-202, Asp-204, Ser-207, and Asp-210. Positions 317-545 (GLAKDFLDLL…AQLKDFIMKL (229 aa)) constitute a Ras-GAP domain. Residues 565 to 672 (PPVKEGPLFI…WLSALRKAST (108 aa)) form the PH domain. The segment at 674-710 (NRGLLRSYHPGIFRGDKWSCCHQKDKTDQGCDKTHSR) adopts a Btk-type zinc-finger fold. Zn(2+) contacts are provided by His-682, Cys-693, Cys-694, and Cys-704.

Ca(2+) serves as cofactor. As to expression, isoform 2 is expressed in osteoblasts.

Its subcellular location is the cytoplasm. The protein resides in the cytosol. It is found in the cell membrane. Its function is as follows. Ca(2+)-dependent Ras GTPase-activating protein, that switches off the Ras-MAPK pathway following a stimulus that elevates intracellular calcium. Functions as an adaptor for Cdc42 and Rac1 during FcR-mediated phagocytosis. Isoform 2 activates the Ras pathway and promotes RANKL shedding by modulating the expression of MMP14. This chain is Ras GTPase-activating protein 4 (Rasa4), found in Mus musculus (Mouse).